Consider the following 109-residue polypeptide: Cell division protein ZapA (109 aa).

The stretch at 21–99 (PEQRDALNQA…IEQALLEQGR (79 aa)) forms a coiled coil.

It belongs to the ZapA family. Type 1 subfamily. In terms of assembly, homodimer. Interacts with FtsZ.

It is found in the cytoplasm. In terms of biological role, activator of cell division through the inhibition of FtsZ GTPase activity, therefore promoting FtsZ assembly into bundles of protofilaments necessary for the formation of the division Z ring. It is recruited early at mid-cell but it is not essential for cell division. In Klebsiella pneumoniae subsp. pneumoniae (strain ATCC 700721 / MGH 78578), this protein is Cell division protein ZapA.